The primary structure comprises 313 residues: Homoserine O-succinyltransferase (313 aa).

Catalysis depends on C142, which acts as the Acyl-thioester intermediate. Substrate-binding residues include K163 and S192. Catalysis depends on H235, which acts as the Proton acceptor. The active site involves E237. R249 serves as a coordination point for substrate.

The protein belongs to the MetA family.

It localises to the cytoplasm. The catalysed reaction is L-homoserine + succinyl-CoA = O-succinyl-L-homoserine + CoA. Its pathway is amino-acid biosynthesis; L-methionine biosynthesis via de novo pathway; O-succinyl-L-homoserine from L-homoserine: step 1/1. Its function is as follows. Transfers a succinyl group from succinyl-CoA to L-homoserine, forming succinyl-L-homoserine. The polypeptide is Homoserine O-succinyltransferase (Shewanella oneidensis (strain ATCC 700550 / JCM 31522 / CIP 106686 / LMG 19005 / NCIMB 14063 / MR-1)).